Here is a 304-residue protein sequence, read N- to C-terminus: N-acetylmuramic acid 6-phosphate etherase (304 aa).

In terms of domain architecture, SIS spans 58–221 (IAERIHRGGR…STGVMIKLGK (164 aa)). Glu86 serves as the catalytic Proton donor. Glu117 is an active-site residue.

The protein belongs to the GCKR-like family. MurNAc-6-P etherase subfamily. In terms of assembly, homodimer.

The enzyme catalyses N-acetyl-D-muramate 6-phosphate + H2O = N-acetyl-D-glucosamine 6-phosphate + (R)-lactate. It functions in the pathway amino-sugar metabolism; N-acetylmuramate degradation. Its function is as follows. Specifically catalyzes the cleavage of the D-lactyl ether substituent of MurNAc 6-phosphate, producing GlcNAc 6-phosphate and D-lactate. In Clostridium beijerinckii (strain ATCC 51743 / NCIMB 8052) (Clostridium acetobutylicum), this protein is N-acetylmuramic acid 6-phosphate etherase.